The sequence spans 74 residues: Chitinases 70, 30, and 20.5 kDa (74 aa).

The segment at 1–27 (XTSATATYAKTQDWGSCFEGKWTIKNT) is N-terminus of 70 kDa chitinase. The segment at 28–52 (AACSSYPSWVAGRSYAAGDIVYYTD) is N-terminus of 30 kDa chitinase. Positions 53-74 (XGYTDLPVSRQKMCQNGMVTNC) are N-terminus of 20.5 kDa chitinase.

This sequence belongs to the glycosyl hydrolase 18 family. Chitinase class II subfamily. In terms of assembly, homodimer, but homotrimers and homotetramers could be observed for the 20.5 and 30 kDa chitinases. In terms of processing, the 70 kDa chitinase is probably the precursor protein of the 30 and 20.5 kDa chitinases.

It catalyses the reaction Random endo-hydrolysis of N-acetyl-beta-D-glucosaminide (1-&gt;4)-beta-linkages in chitin and chitodextrins.. Functionally, able to cleave chitin oligomers from N=3 to 6. In Streptomyces olivaceoviridis (Streptomyces corchorusii), this protein is Chitinases 70, 30, and 20.5 kDa.